Here is a 503-residue protein sequence, read N- to C-terminus: Putative aldehyde dehydrogenase-like protein C9E9.09c (503 aa).

247 to 252 (GSTGVG) contributes to the NAD(+) binding site. The residue at position 248 (serine 248) is a Phosphoserine. The Proton acceptor role is filled by glutamate 270. Cysteine 304 functions as the Nucleophile in the catalytic mechanism. Phosphoserine is present on serine 501.

This sequence belongs to the aldehyde dehydrogenase family.

The chain is Putative aldehyde dehydrogenase-like protein C9E9.09c from Schizosaccharomyces pombe (strain 972 / ATCC 24843) (Fission yeast).